Consider the following 1439-residue polypeptide: Gag-Pol polyprotein (1439 aa).

Gly-2 carries N-myristoyl glycine; by host lipidation. The segment at 7–31 (ILRGEKLDAWEKIKLRPGGKKHYML) is interaction with Gp41. The interval 8-43 (LRGEKLDAWEKIKLRPGGKKHYMLKHLVWANRELEK) is interaction with host CALM1. The tract at residues 12 to 19 (KLDAWEKI) is interaction with host AP3D1. Residues 14-33 (DAWEKIKLRPGGKKHYMLKH) form an interaction with membrane phosphatidylinositol 4,5-bisphosphate and RNA region. A Nuclear export signal motif is present at residues 16–22 (WEKIKLR). Positions 26–32 (KKHYMLK) match the Nuclear localization signal motif. The interval 73–77 (EELKS) is interaction with membrane phosphatidylinositol 4,5-bisphosphate. A disordered region spans residues 105–128 (EEEQNESQQKTQQAGAADRGKDSQ). Position 130 is a phosphotyrosine; by host (Tyr-130). Positions 187 to 225 (NTVGGHQAAMQMLKDTINEEAAEWDRLHPVHAGPVAPGQ) are interaction with human PPIA/CYPA and NUP153. A dimerization/Multimerization of capsid protein p24 region spans residues 275-361 (YSPVSILDIK…GGPAHKARVL (87 aa)). 2 consecutive CCHC-type zinc fingers follow at residues 387-404 (IKCF…NCRA) and 408-425 (KGCW…DCTE). The segment at 441–485 (KAREFPSEQTRANSPTRESQTRANSPTTRELQVRGSNTFSEAGAE) is disordered. The span at 447–480 (SEQTRANSPTRESQTRANSPTTRELQVRGSNTFS) shows a compositional bias: polar residues. The dimerization of protease stretch occupies residues 493 to 497 (PQITL). The 70-residue stretch at 512 to 581 (KEALLDTGAD…TPVNIIGRNM (70 aa)) folds into the Peptidase A2 domain. Asp-517 acts as the For protease activity; shared with dimeric partner in catalysis. Dimerization of protease regions lie at residues 541-547 (GIGGFIK) and 580-592 (NMLT…LNFP). Residues 635–825 (EGKISRIGPE…PPFLWMGYEL (191 aa)) enclose the Reverse transcriptase domain. Mg(2+) contacts are provided by Asp-701, Asp-776, and Asp-777. Residues 818-826 (FLWMGYELH) are RT 'primer grip'. A Tryptophan repeat motif motif is present at residues 989–1005 (WEAWWTDYWQATWIPEW). In terms of domain architecture, RNase H type-1 spans 1025–1148 (IAGVETFYVD…VDKLVSSGIR (124 aa)). Mg(2+)-binding residues include Asp-1034, Glu-1069, Asp-1089, and Asp-1140. The segment at 1154–1195 (DGIDKAQEEHEKYHSNWRAMANEFNIPPVVPKEIVACCDKCQ) adopts an Integrase-type zinc-finger fold. The Zn(2+) site is built by His-1163, His-1167, Cys-1191, and Cys-1194. The region spanning 1205–1355 (VNCSPGIWQL…SAGERIIDII (151 aa)) is the Integrase catalytic domain. The Mg(2+) site is built by Asp-1215, Asp-1267, and Glu-1303. A DNA-binding region (integrase-type) is located at residues 1374 to 1421 (FRVYYRDSRDPIWKGPAKLLWKGEGAVVIQDNSDIKVVPRRKAKIIRD).

As to quaternary structure, homotrimer; further assembles as hexamers of trimers. Interacts with gp41 (via C-terminus). Interacts with host CALM1; this interaction induces a conformational change in the Matrix protein, triggering exposure of the myristate group. Interacts with host AP3D1; this interaction allows the polyprotein trafficking to multivesicular bodies during virus assembly. Part of the pre-integration complex (PIC) which is composed of viral genome, matrix protein, Vpr and integrase. Homodimer; the homodimer further multimerizes as homohexamers or homopentamers. Interacts with human PPIA/CYPA; This interaction stabilizes the capsid. Interacts with human NUP153. Interacts with host PDZD8; this interaction stabilizes the capsid. Interacts with monkey TRIM5; this interaction destabilizes the capsid. In terms of assembly, homodimer, whose active site consists of two apposed aspartic acid residues. As to quaternary structure, heterodimer of p66 RT and p51 RT (RT p66/p51). Heterodimerization of RT is essential for DNA polymerase activity. The overall folding of the subdomains is similar in p66 RT and p51 RT but the spatial arrangements of the subdomains are dramatically different. Homotetramer; may further associate as a homohexadecamer. Part of the pre-integration complex (PIC) which is composed of viral genome, matrix protein, Vpr and integrase. Interacts with human SMARCB1/INI1 and human PSIP1/LEDGF isoform 1. Interacts with human KPNA3; this interaction might play a role in nuclear import of the pre-integration complex. Interacts with human NUP153; this interaction might play a role in nuclear import of the pre-integration complex. The cofactor is Mg(2+). Post-translationally, specific enzymatic cleavages by the viral protease yield mature proteins. The protease is released by autocatalytic cleavage. The polyprotein is cleaved during and after budding, this process is termed maturation. Proteolytic cleavage of p66 RT removes the RNase H domain to yield the p51 RT subunit. Nucleocapsid protein p7 might be further cleaved after virus entry. In terms of processing, tyrosine phosphorylated presumably in the virion by a host kinase. Phosphorylation is apparently not a major regulator of membrane association. Phosphorylated possibly by host MAPK1; this phosphorylation is necessary for Pin1-mediated virion uncoating. Post-translationally, methylated by host PRMT6, impairing its function by reducing RNA annealing and the initiation of reverse transcription.

It localises to the host cell membrane. Its subcellular location is the host endosome. It is found in the host multivesicular body. The protein localises to the virion membrane. The protein resides in the host nucleus. It localises to the host cytoplasm. Its subcellular location is the virion. The enzyme catalyses Specific for a P1 residue that is hydrophobic, and P1' variable, but often Pro.. It carries out the reaction Endohydrolysis of RNA in RNA/DNA hybrids. Three different cleavage modes: 1. sequence-specific internal cleavage of RNA. Human immunodeficiency virus type 1 and Moloney murine leukemia virus enzymes prefer to cleave the RNA strand one nucleotide away from the RNA-DNA junction. 2. RNA 5'-end directed cleavage 13-19 nucleotides from the RNA end. 3. DNA 3'-end directed cleavage 15-20 nucleotides away from the primer terminus.. It catalyses the reaction 3'-end directed exonucleolytic cleavage of viral RNA-DNA hybrid.. The catalysed reaction is DNA(n) + a 2'-deoxyribonucleoside 5'-triphosphate = DNA(n+1) + diphosphate. Protease: The viral protease is inhibited by many synthetic protease inhibitors (PIs), such as amprenavir, atazanavir, indinavir, loprinavir, nelfinavir, ritonavir and saquinavir. Use of protease inhibitors in tritherapy regimens permit more ambitious therapeutic strategies. Reverse transcriptase/ribonuclease H: RT can be inhibited either by nucleoside RT inhibitors (NRTIs) or by non nucleoside RT inhibitors (NNRTIs). NRTIs act as chain terminators, whereas NNRTIs inhibit DNA polymerization by binding a small hydrophobic pocket near the RT active site and inducing an allosteric change in this region. Classical NRTIs are abacavir, adefovir (PMEA), didanosine (ddI), lamivudine (3TC), stavudine (d4T), tenofovir (PMPA), zalcitabine (ddC), and zidovudine (AZT). Classical NNRTIs are atevirdine (BHAP U-87201E), delavirdine, efavirenz (DMP-266), emivirine (I-EBU), and nevirapine (BI-RG-587). The tritherapies used as a basic effective treatment of AIDS associate two NRTIs and one NNRTI. Its function is as follows. Mediates, with Gag polyprotein, the essential events in virion assembly, including binding the plasma membrane, making the protein-protein interactions necessary to create spherical particles, recruiting the viral Env proteins, and packaging the genomic RNA via direct interactions with the RNA packaging sequence (Psi). Gag-Pol polyprotein may regulate its own translation, by the binding genomic RNA in the 5'-UTR. At low concentration, the polyprotein would promote translation, whereas at high concentration, the polyprotein would encapsidate genomic RNA and then shut off translation. Targets the polyprotein to the plasma membrane via a multipartite membrane-binding signal, that includes its myristoylated N-terminus. Matrix protein is part of the pre-integration complex. Implicated in the release from host cell mediated by Vpu. Binds to RNA. Functionally, forms the conical core that encapsulates the genomic RNA-nucleocapsid complex in the virion. Most core are conical, with only 7% tubular. The core is constituted by capsid protein hexamer subunits. The core is disassembled soon after virion entry. Host restriction factors such as TRIM5-alpha or TRIMCyp bind retroviral capsids and cause premature capsid disassembly, leading to blocks in reverse transcription. Capsid restriction by TRIM5 is one of the factors which restricts HIV-1 to the human species. Host PIN1 apparently facilitates the virion uncoating. On the other hand, interactions with PDZD8 or CYPA stabilize the capsid. In terms of biological role, encapsulates and protects viral dimeric unspliced genomic RNA (gRNA). Binds these RNAs through its zinc fingers. Acts as a nucleic acid chaperone which is involved in rearangement of nucleic acid secondary structure during gRNA retrotranscription. Also facilitates template switch leading to recombination. As part of the polyprotein, participates in gRNA dimerization, packaging, tRNA incorporation and virion assembly. Its function is as follows. Aspartyl protease that mediates proteolytic cleavages of Gag and Gag-Pol polyproteins during or shortly after the release of the virion from the plasma membrane. Cleavages take place as an ordered, step-wise cascade to yield mature proteins. This process is called maturation. Displays maximal activity during the budding process just prior to particle release from the cell. Also cleaves Nef and Vif, probably concomitantly with viral structural proteins on maturation of virus particles. Hydrolyzes host EIF4GI and PABP1 in order to shut off the capped cellular mRNA translation. The resulting inhibition of cellular protein synthesis serves to ensure maximal viral gene expression and to evade host immune response. Also mediates cleavage of host YTHDF3. Mediates cleavage of host CARD8, thereby activating the CARD8 inflammasome, leading to the clearance of latent HIV-1 in patient CD4(+) T-cells after viral reactivation; in contrast, HIV-1 can evade CARD8-sensing when its protease remains inactive in infected cells prior to viral budding. Multifunctional enzyme that converts the viral RNA genome into dsDNA in the cytoplasm, shortly after virus entry into the cell. This enzyme displays a DNA polymerase activity that can copy either DNA or RNA templates, and a ribonuclease H (RNase H) activity that cleaves the RNA strand of RNA-DNA heteroduplexes in a partially processive 3' to 5' endonucleasic mode. Conversion of viral genomic RNA into dsDNA requires many steps. A tRNA(3)-Lys binds to the primer-binding site (PBS) situated at the 5'-end of the viral RNA. RT uses the 3' end of the tRNA primer to perform a short round of RNA-dependent minus-strand DNA synthesis. The reading proceeds through the U5 region and ends after the repeated (R) region which is present at both ends of viral RNA. The portion of the RNA-DNA heteroduplex is digested by the RNase H, resulting in a ssDNA product attached to the tRNA primer. This ssDNA/tRNA hybridizes with the identical R region situated at the 3' end of viral RNA. This template exchange, known as minus-strand DNA strong stop transfer, can be either intra- or intermolecular. RT uses the 3' end of this newly synthesized short ssDNA to perform the RNA-dependent minus-strand DNA synthesis of the whole template. RNase H digests the RNA template except for two polypurine tracts (PPTs) situated at the 5'-end and near the center of the genome. It is not clear if both polymerase and RNase H activities are simultaneous. RNase H probably can proceed both in a polymerase-dependent (RNA cut into small fragments by the same RT performing DNA synthesis) and a polymerase-independent mode (cleavage of remaining RNA fragments by free RTs). Secondly, RT performs DNA-directed plus-strand DNA synthesis using the PPTs that have not been removed by RNase H as primers. PPTs and tRNA primers are then removed by RNase H. The 3' and 5' ssDNA PBS regions hybridize to form a circular dsDNA intermediate. Strand displacement synthesis by RT to the PBS and PPT ends produces a blunt ended, linear dsDNA copy of the viral genome that includes long terminal repeats (LTRs) at both ends. Functionally, catalyzes viral DNA integration into the host chromosome, by performing a series of DNA cutting and joining reactions. This enzyme activity takes place after virion entry into a cell and reverse transcription of the RNA genome in dsDNA. The first step in the integration process is 3' processing. This step requires a complex comprising the viral genome, matrix protein, Vpr and integrase. This complex is called the pre-integration complex (PIC). The integrase protein removes 2 nucleotides from each 3' end of the viral DNA, leaving recessed CA OH's at the 3' ends. In the second step, the PIC enters cell nucleus. This process is mediated through integrase and Vpr proteins, and allows the virus to infect a non dividing cell. This ability to enter the nucleus is specific of lentiviruses, other retroviruses cannot and rely on cell division to access cell chromosomes. In the third step, termed strand transfer, the integrase protein joins the previously processed 3' ends to the 5' ends of strands of target cellular DNA at the site of integration. The 5'-ends are produced by integrase-catalyzed staggered cuts, 5 bp apart. A Y-shaped, gapped, recombination intermediate results, with the 5'-ends of the viral DNA strands and the 3' ends of target DNA strands remaining unjoined, flanking a gap of 5 bp. The last step is viral DNA integration into host chromosome. This involves host DNA repair synthesis in which the 5 bp gaps between the unjoined strands are filled in and then ligated. Since this process occurs at both cuts flanking the HIV genome, a 5 bp duplication of host DNA is produced at the ends of HIV-1 integration. Alternatively, Integrase may catalyze the excision of viral DNA just after strand transfer, this is termed disintegration. This chain is Gag-Pol polyprotein (gag-pol), found in Human immunodeficiency virus type 1 group M subtype C (isolate ETH2220) (HIV-1).